Reading from the N-terminus, the 895-residue chain is WD repeat-containing protein 36 (895 aa).

WD repeat units follow at residues 30-63, 72-101, 110-143, 152-186, 193-230, 237-272, 277-320, and 327-361; these read VVRFSALKRRFYVTTCVGKSFHTYDVQKLSLVAV, CCMAADGRLVFAAYGNVFSAFARNKEIVHT, HFLQPFGDHIISVDTDGILIIWHIYSEEEYLQLT, SAILHPSTYLNKILLGSEQGSLQLWNVKSNKLLYT, GVTALQQAPAVDVVAIGLMSGQVIIHNIKFNETLMKFR, TSISFRTDGHPVMAAGSPCGHIGLWDLEDKKLINQM, STAI…RFRM, and TNIRYYGQNGQQILSASQDGTLQSFSTVHEKFNKS. Residues Ser382 and Ser399 each carry the phosphoserine modification. WD repeat units follow at residues 389-428, 441-475, 486-522, 527-562, 564-605, and 607-645; these read TKFAAEEARESDWDGIIACHQGKLSCSTWNYQKSTIGAYF, ATAVDITSCGNFAVIGLSSGTVDVYNMQSGIHRGS, VRGVAVDGLNQLTVTTGSEGLLKFWNFKNKILIHSVS, PNIMLLHRDSGILGLALDDFSISVLDIETRKIVREF, GHQG…DCFL, and DSAPLNVSMSPTGDFLATSHVDHLGIYLWSNISLYSVVS.

Part of the small subunit (SSU) processome, composed of more than 70 proteins and the RNA chaperone small nucleolar RNA (snoRNA) U3. As to expression, expressed in heart, placenta, liver, skeletal muscle, kidney and pancreas. In ocular tissues, strong expression in iris, sclera, ciliary muscle, ciliary body, retina and optic nerve.

The protein localises to the nucleus. Its subcellular location is the nucleolus. Functionally, part of the small subunit (SSU) processome, first precursor of the small eukaryotic ribosomal subunit. During the assembly of the SSU processome in the nucleolus, many ribosome biogenesis factors, an RNA chaperone and ribosomal proteins associate with the nascent pre-rRNA and work in concert to generate RNA folding, modifications, rearrangements and cleavage as well as targeted degradation of pre-ribosomal RNA by the RNA exosome. Involved in the nucleolar processing of SSU 18S rRNA. Involved in T-cell activation and highly coregulated with IL2. The polypeptide is WD repeat-containing protein 36 (Homo sapiens (Human)).